Here is a 133-residue protein sequence, read N- to C-terminus: ATP synthase epsilon chain, chloroplastic (133 aa).

This sequence belongs to the ATPase epsilon chain family. In terms of assembly, F-type ATPases have 2 components, CF(1) - the catalytic core - and CF(0) - the membrane proton channel. CF(1) has five subunits: alpha(3), beta(3), gamma(1), delta(1), epsilon(1). CF(0) has three main subunits: a, b and c.

The protein localises to the plastid. Its subcellular location is the chloroplast thylakoid membrane. Its function is as follows. Produces ATP from ADP in the presence of a proton gradient across the membrane. The sequence is that of ATP synthase epsilon chain, chloroplastic from Nicotiana tomentosiformis (Tobacco).